Consider the following 453-residue polypeptide: Homogentisate 1,2-dioxygenase (453 aa).

Residue H306 is the Proton acceptor of the active site. Residues H349 and E355 each coordinate Fe cation. Residues Y364 and H385 each contribute to the homogentisate site. H385 is a binding site for Fe cation.

Belongs to the homogentisate dioxygenase family. Hexamer; dimer of trimers. It depends on Fe cation as a cofactor.

The catalysed reaction is homogentisate + O2 = 4-maleylacetoacetate + H(+). The protein operates within amino-acid degradation; L-phenylalanine degradation; acetoacetate and fumarate from L-phenylalanine: step 4/6. In terms of biological role, involved in the catabolism of homogentisate (2,5-dihydroxyphenylacetate or 2,5-OH-PhAc), a central intermediate in the degradation of phenylalanine and tyrosine. Catalyzes the oxidative ring cleavage of the aromatic ring of homogentisate to yield maleylacetoacetate. The sequence is that of Homogentisate 1,2-dioxygenase from Rhizobium rhizogenes (strain K84 / ATCC BAA-868) (Agrobacterium radiobacter).